We begin with the raw amino-acid sequence, 582 residues long: Phosphoglucomutase, cytoplasmic (582 aa).

2 residues coordinate alpha-D-glucose 1,6-bisphosphate: Arg-25 and Ser-124. Ser-124 functions as the Phosphoserine intermediate in the catalytic mechanism. Mg(2+) contacts are provided by Ser-124, Asp-299, Asp-301, and Asp-303. Ser-124 is subject to Phosphoserine. Alpha-D-glucose 1,6-bisphosphate contacts are provided by Asp-303, Arg-304, Thr-367, Glu-386, Ser-388, and Lys-399.

Belongs to the phosphohexose mutase family. Monomer. Mg(2+) is required as a cofactor.

Its subcellular location is the cytoplasm. It catalyses the reaction alpha-D-glucose 1-phosphate = alpha-D-glucose 6-phosphate. The catalysed reaction is O-phospho-L-seryl-[protein] + alpha-D-glucose 1-phosphate = alpha-D-glucose 1,6-bisphosphate + L-seryl-[protein]. The enzyme catalyses alpha-D-glucose 1,6-bisphosphate + L-seryl-[protein] = O-phospho-L-seryl-[protein] + alpha-D-glucose 6-phosphate. In terms of biological role, catalyzes the reversible isomerization of alpha-D-glucose 1-phosphate to alpha-D-glucose 6-phosphate. The mechanism proceeds via the intermediate compound alpha-D-glucose 1,6-bisphosphate. This enzyme participates in both the breakdown and synthesis of glucose. The sequence is that of Phosphoglucomutase, cytoplasmic (PGM1) from Populus tremula (European aspen).